Reading from the N-terminus, the 540-residue chain is CTP synthase (540 aa).

The interval 1 to 270 (MNNLTSTKFI…DTQILKHFNI (270 aa)) is amidoligase domain. A CTP-binding site is contributed by S18. S18 lines the UTP pocket. Residues 19–24 (SLGKGL) and D76 each bind ATP. Positions 76 and 144 each coordinate Mg(2+). CTP-binding positions include 151–153 (DIE), 191–196 (KTKPTQ), and K227. Residues 191–196 (KTKPTQ) and K227 contribute to the UTP site. A Glutamine amidotransferase type-1 domain is found at 295–537 (TIAIIGKYIK…VQASLNYQET (243 aa)). G356 contributes to the L-glutamine binding site. C383 functions as the Nucleophile; for glutamine hydrolysis in the catalytic mechanism. Residues 384–387 (MGMQ), E407, and R462 each bind L-glutamine. Catalysis depends on residues H510 and E512.

Belongs to the CTP synthase family. As to quaternary structure, homotetramer.

The enzyme catalyses UTP + L-glutamine + ATP + H2O = CTP + L-glutamate + ADP + phosphate + 2 H(+). It catalyses the reaction L-glutamine + H2O = L-glutamate + NH4(+). It carries out the reaction UTP + NH4(+) + ATP = CTP + ADP + phosphate + 2 H(+). It functions in the pathway pyrimidine metabolism; CTP biosynthesis via de novo pathway; CTP from UDP: step 2/2. Allosterically activated by GTP, when glutamine is the substrate; GTP has no effect on the reaction when ammonia is the substrate. The allosteric effector GTP functions by stabilizing the protein conformation that binds the tetrahedral intermediate(s) formed during glutamine hydrolysis. Inhibited by the product CTP, via allosteric rather than competitive inhibition. Catalyzes the ATP-dependent amination of UTP to CTP with either L-glutamine or ammonia as the source of nitrogen. Regulates intracellular CTP levels through interactions with the four ribonucleotide triphosphates. This Ehrlichia ruminantium (strain Welgevonden) protein is CTP synthase.